Reading from the N-terminus, the 2260-residue chain is Reducing polyketide synthase pksF (2260 aa).

In terms of domain architecture, Ketosynthase family 3 (KS3) spans 20–445 (VEPIAIVGFG…GTNAHVVLDD (426 aa)). Catalysis depends on for beta-ketoacyl synthase activity residues cysteine 194, histidine 329, and histidine 368. The tract at residues 598-933 (FVFTGQGAQW…ECAGKLHTIG (336 aa)) is malonyl-CoA:ACP transacylase (MAT) domain. Serine 689 functions as the For malonyltransferase activity in the catalytic mechanism. The tract at residues 984-1121 (HELLGSRTPD…GYVAIEYDDR (138 aa)) is N-terminal hotdog fold. A dehydratase (DH) domain region spans residues 984-1281 (HELLGSRTPD…FRNKLFSITA (298 aa)). The PKS/mFAS DH domain maps to 984–1306 (HELLGSRTPD…TSTIGRNSPS (323 aa)). Residue histidine 1016 is the Proton acceptor; for dehydratase activity of the active site. Residues 1150 to 1306 (RIAIDSADIY…TSTIGRNSPS (157 aa)) are C-terminal hotdog fold. Aspartate 1216 functions as the Proton donor; for dehydratase activity in the catalytic mechanism. The enoylreductase (ER) domain stretch occupies residues 1544-1859 (GILKTLHYEQ…DVDVVEKIVI (316 aa)). The ketoreductase (KR) domain stretch occupies residues 1882–2104 (PDASYLIAGA…LRFCCDPDRV (223 aa)). Residues 2174–2251 (QATDIVVEAI…LLAVKVAGKS (78 aa)) enclose the Carrier domain. Serine 2211 carries the O-(pantetheine 4'-phosphoryl)serine modification.

The cofactor is pantetheine 4'-phosphate.

Reducing polyketide synthase that catalyzes the formation of a C22 intermediate attached to the ACP. Release by intramolecular hydrolysis by the enolized delta-carbonyl would give the pyrone product aslanipyrone. Alternatively, KR-mediated reduction of the beta-carbonyl of the C22 intermediate would form a beta-hydroxy thioester intermediate, which could be a substrate for a further KS-mediated condensation of an additional C2 unit to form a C24 intermediate, which cyclizes by aldol condensation followed by decarboxylation to form aslaniol. Neither aslanipyrone, aslaniol, nor their derivatives have been detected in A.solani, probably due to a low abundance and/or extensive post-PKS modification. It is assumed that the branching point from C22 to C24 is the result of KR activity on the C22 intermediate anchored to the ACP. The polypeptide is Reducing polyketide synthase pksF (Alternaria solani).